A 387-amino-acid chain; its full sequence is Testis-expressed protein 9 (387 aa).

2 disordered regions span residues 1-25 (MAGRSVRVPRRGSAGTQSRGQLAAG) and 58-133 (REQQ…LKYP). Composition is skewed to polar residues over residues 70–91 (ALTTSCKEEGGSSSRDLLSSEG) and 103–115 (KNTGPVNKIQNRL). Positions 184–347 (IGTEAQIRFL…ERQKGELMIG (164 aa)) form a coiled coil.

In terms of tissue distribution, testis-specific.

The protein resides in the cytoplasm. It is found in the cytoskeleton. It localises to the microtubule organizing center. The protein localises to the centrosome. Its subcellular location is the centriolar satellite. This is Testis-expressed protein 9 (Tex9) from Mus musculus (Mouse).